The following is a 978-amino-acid chain: Macrophage colony-stimulating factor 1 receptor (978 aa).

An N-terminal signal peptide occupies residues 1–19 (MELGPPLVLLLATVWHGQG). The Extracellular portion of the chain corresponds to 20-515 (APVIEPSGPE…QLPDESLFTP (496 aa)). Ig-like C2-type domains follow at residues 24–104 (EPSG…VKDP), 107–197 (SWNL…KVNR), 204–298 (QIKL…VVES), 299–397 (AYLN…LTLR), and 398–503 (YPPE…SLGQ). Cystine bridges form between C42–C84, C127–C177, and C224–C278. 2 N-linked (GlcNAc...) asparagine glycosylation sites follow: N45 and N73. N-linked (GlcNAc...) asparagine glycosylation is found at N302, N335, N389, N410, N449, N478, and N491. A disulfide bond links C417 and C483. A helical transmembrane segment spans residues 516-536 (VVVACMSVMSLLVLLLLLLLY). The Cytoplasmic portion of the chain corresponds to 537 to 978 (KYKQKPKYQV…LQPNNYQFAC (442 aa)). The segment at 540–572 (QKPKYQVRWKIIERYEGNSYTFIDPTQLPYNEK) is regulatory juxtamembrane domain. Y544 and Y559 each carry phosphotyrosine; by autocatalysis. The 335-residue stretch at 580–914 (LQFGKTLGAG…CFLLQEQARL (335 aa)) folds into the Protein kinase domain. Residues 586–594 (LGAGAFGKV) and K614 each bind ATP. Phosphotyrosine; by autocatalysis is present on residues Y697 and Y706. S711 carries the phosphoserine modification. Y721 carries the post-translational modification Phosphotyrosine; by autocatalysis. D776 serves as the catalytic Proton acceptor. The interval 794 to 816 (DFGLARDIMNDSNYVVKGNARLP) is activation loop. 2 positions are modified to phosphotyrosine; by autocatalysis: Y807 and Y921. The disordered stretch occupies residues 921–957 (YANLPSSGGSSGSDSGGGSSGGSSSEPEEESSSEHLA). The segment covering 929–941 (GSSGSDSGGGSSG) has biased composition (gly residues). Y974 is subject to Phosphotyrosine; by autocatalysis.

Belongs to the protein kinase superfamily. Tyr protein kinase family. CSF-1/PDGF receptor subfamily. As to quaternary structure, monomer. Homodimer. Interacts with CSF1 and IL34. Interaction with dimeric CSF1 or IL34 leads to receptor homodimerization. Interacts with INPPL1/SHIP2 and THOC5. Interacts (tyrosine phosphorylated) with PLCG2 (via SH2 domain). Interacts (tyrosine phosphorylated) with PIK3R1 (via SH2 domain). Interacts (tyrosine phosphorylated) with FYN, YES1 and SRC (via SH2 domain). Interacts (tyrosine phosphorylated) with CBL, GRB2 and SLA2. Autophosphorylated in response to CSF1 or IL34 binding. Phosphorylation at Tyr-559 is important for normal down-regulation of signaling by ubiquitination, internalization and degradation. Phosphorylation at Tyr-559 and Tyr-807 is important for interaction with SRC family members, including FYN, YES1 and SRC, and for subsequent activation of these protein kinases. Phosphorylation at Tyr-697 and Tyr-921 is important for interaction with GRB2. Phosphorylation at Tyr-721 is important for interaction with PIK3R1. Phosphorylation at Tyr-721 and Tyr-807 is important for interaction with PLCG2. Phosphorylation at Tyr-974 is important for interaction with CBL. Dephosphorylation by PTPN2 negatively regulates downstream signaling and macrophage differentiation. Post-translationally, ubiquitinated. Becomes rapidly polyubiquitinated after autophosphorylation, leading to its degradation.

It localises to the cell membrane. It catalyses the reaction L-tyrosyl-[protein] + ATP = O-phospho-L-tyrosyl-[protein] + ADP + H(+). Its activity is regulated as follows. Present in an inactive conformation in the absence of bound ligand. CSF1 or IL34 binding leads to dimerization and activation by autophosphorylation on tyrosine residues. Its function is as follows. Tyrosine-protein kinase that acts as a cell-surface receptor for CSF1 and IL34 and plays an essential role in the regulation of survival, proliferation and differentiation of hematopoietic precursor cells, especially mononuclear phagocytes, such as macrophages and monocytes. Promotes the release of pro-inflammatory chemokines in response to IL34 and CSF1, and thereby plays an important role in innate immunity and in inflammatory processes. Plays an important role in the regulation of osteoclast proliferation and differentiation, the regulation of bone resorption, and is required for normal bone and tooth development. Required for normal male and female fertility, and for normal development of milk ducts and acinar structures in the mammary gland during pregnancy. Promotes reorganization of the actin cytoskeleton, regulates formation of membrane ruffles, cell adhesion and cell migration, and promotes cancer cell invasion. Activates several signaling pathways in response to ligand binding, including the ERK1/2 and the JNK pathway. Phosphorylates PIK3R1, PLCG2, GRB2, SLA2 and CBL. Activation of PLCG2 leads to the production of the cellular signaling molecules diacylglycerol and inositol 1,4,5-trisphosphate, that then lead to the activation of protein kinase C family members, especially PRKCD. Phosphorylation of PIK3R1, the regulatory subunit of phosphatidylinositol 3-kinase, leads to activation of the AKT1 signaling pathway. Activated CSF1R also mediates activation of the MAP kinases MAPK1/ERK2 and/or MAPK3/ERK1, and of the SRC family kinases SRC, FYN and YES1. Activated CSF1R transmits signals both via proteins that directly interact with phosphorylated tyrosine residues in its intracellular domain, or via adapter proteins, such as GRB2. Promotes activation of STAT family members STAT3, STAT5A and/or STAT5B. Promotes tyrosine phosphorylation of SHC1 and INPP5D/SHIP-1. Receptor signaling is down-regulated by protein phosphatases, such as INPP5D/SHIP-1, that dephosphorylate the receptor and its downstream effectors, and by rapid internalization of the activated receptor. In the central nervous system, may play a role in the development of microglia macrophages. The sequence is that of Macrophage colony-stimulating factor 1 receptor (Csf1r) from Rattus norvegicus (Rat).